We begin with the raw amino-acid sequence, 78 residues long: MKQIFIGIIRFYQKFISPMTPPTCRFYPTCSHYGLEAFQKHGAFKGFWLTCKRILKCHPFHPGGFDPVPDKKDDKVNS.

Belongs to the UPF0161 family.

The protein resides in the cell membrane. In terms of biological role, could be involved in insertion of integral membrane proteins into the membrane. This chain is Putative membrane protein insertion efficiency factor, found in Bacillus anthracis (strain A0248).